The following is a 180-amino-acid chain: Isopentenyl-diphosphate Delta-isomerase (180 aa).

Mn(2+)-binding residues include H22 and H28. Residues 26-160 form the Nudix hydrolase domain; it reads LKHKAVSVFA…PERFTPWLKI (135 aa). Residue C62 is part of the active site. C62 lines the Mg(2+) pocket. Mn(2+) is bound at residue H64. E82 serves as a coordination point for Mg(2+). Mn(2+)-binding residues include E108 and E110. Residue E110 is part of the active site.

It belongs to the IPP isomerase type 1 family. Requires Mg(2+) as cofactor. It depends on Mn(2+) as a cofactor.

It localises to the cytoplasm. The catalysed reaction is isopentenyl diphosphate = dimethylallyl diphosphate. The protein operates within isoprenoid biosynthesis; dimethylallyl diphosphate biosynthesis; dimethylallyl diphosphate from isopentenyl diphosphate: step 1/1. Functionally, catalyzes the 1,3-allylic rearrangement of the homoallylic substrate isopentenyl (IPP) to its highly electrophilic allylic isomer, dimethylallyl diphosphate (DMAPP). The chain is Isopentenyl-diphosphate Delta-isomerase from Ruegeria pomeroyi (strain ATCC 700808 / DSM 15171 / DSS-3) (Silicibacter pomeroyi).